The sequence spans 383 residues: Chaperone protein DnaJ (383 aa).

One can recognise a J domain in the interval 6-70 (DYYDVLGVGR…QKRAAYDQYG (65 aa)). A CR-type zinc finger spans residues 140-222 (GKETKISYSR…CHGTGREEER (83 aa)). Residues Cys153, Cys156, Cys170, Cys173, Cys196, Cys199, Cys210, and Cys213 each contribute to the Zn(2+) site. CXXCXGXG motif repeat units lie at residues 153-160 (CHTCHGSG), 170-177 (CHKCHGAG), 196-203 (CDVCGGTG), and 210-217 (CDTCHGTG).

The protein belongs to the DnaJ family. In terms of assembly, homodimer. It depends on Zn(2+) as a cofactor.

It localises to the cytoplasm. In terms of biological role, participates actively in the response to hyperosmotic and heat shock by preventing the aggregation of stress-denatured proteins and by disaggregating proteins, also in an autonomous, DnaK-independent fashion. Unfolded proteins bind initially to DnaJ; upon interaction with the DnaJ-bound protein, DnaK hydrolyzes its bound ATP, resulting in the formation of a stable complex. GrpE releases ADP from DnaK; ATP binding to DnaK triggers the release of the substrate protein, thus completing the reaction cycle. Several rounds of ATP-dependent interactions between DnaJ, DnaK and GrpE are required for fully efficient folding. Also involved, together with DnaK and GrpE, in the DNA replication of plasmids through activation of initiation proteins. The protein is Chaperone protein DnaJ of Latilactobacillus sakei (Lactobacillus sakei).